The chain runs to 150 residues: Large ribosomal subunit protein uL13 (150 aa).

The protein belongs to the universal ribosomal protein uL13 family. Part of the 50S ribosomal subunit.

Functionally, this protein is one of the early assembly proteins of the 50S ribosomal subunit, although it is not seen to bind rRNA by itself. It is important during the early stages of 50S assembly. The chain is Large ribosomal subunit protein uL13 from Chlorobium phaeobacteroides (strain BS1).